Here is a 363-residue protein sequence, read N- to C-terminus: tRNA/tmRNA (uracil-C(5))-methyltransferase (363 aa).

5 residues coordinate S-adenosyl-L-methionine: Gln-187, Tyr-215, Asn-220, Glu-236, and Asp-296. Residue Cys-321 is the Nucleophile of the active site. Glu-355 functions as the Proton acceptor in the catalytic mechanism.

It belongs to the class I-like SAM-binding methyltransferase superfamily. RNA M5U methyltransferase family. TrmA subfamily.

The catalysed reaction is uridine(54) in tRNA + S-adenosyl-L-methionine = 5-methyluridine(54) in tRNA + S-adenosyl-L-homocysteine + H(+). It catalyses the reaction uridine(341) in tmRNA + S-adenosyl-L-methionine = 5-methyluridine(341) in tmRNA + S-adenosyl-L-homocysteine + H(+). In terms of biological role, dual-specificity methyltransferase that catalyzes the formation of 5-methyluridine at position 54 (m5U54) in all tRNAs, and that of position 341 (m5U341) in tmRNA (transfer-mRNA). This Pseudomonas fluorescens protein is tRNA/tmRNA (uracil-C(5))-methyltransferase.